We begin with the raw amino-acid sequence, 774 residues long: Neprilysin-2 (774 aa).

The Cytoplasmic segment spans residues 1 to 20 (MQTVIQNPNWWRRRNKLEKS). A helical; Signal-anchor for type II membrane protein membrane pass occupies residues 21-41 (LLVSLGIMFVVLATGFGLWIG). Residues 42-774 (KVLRTSPPSN…MNPVQKCEVW (733 aa)) lie on the Extracellular side of the membrane. The disordered stretch occupies residues 50–79 (SNPQATALHGDSTTINQVPTGTASKGKSGD). Residues 60–74 (DSTTINQVPTGTASK) are compositionally biased toward polar residues. A Peptidase M13 domain is found at 83–774 (VCLTQECIHT…MNPVQKCEVW (692 aa)). Intrachain disulfides connect Cys-84-Cys-89, Cys-107-Cys-759, Cys-115-Cys-719, Cys-171-Cys-424, and Cys-646-Cys-771. Asn-173, Asn-239, Asn-264, Asn-305, Asn-315, Asn-358, and Asn-554 each carry an N-linked (GlcNAc...) asparagine glycan. His-609 is a Zn(2+) binding site. Glu-610 is a catalytic residue. His-613 serves as a coordination point for Zn(2+). N-linked (GlcNAc...) asparagine glycosylation occurs at Asn-653. Residue Glu-671 coordinates Zn(2+). Asp-675 functions as the Proton donor in the catalytic mechanism.

Belongs to the peptidase M13 family. Zn(2+) is required as a cofactor. Post-translationally, N-glycosylated. In terms of processing, the soluble form is probably produced by proteolytic cleavage. Detected in the stellate cells in the main segment and the bar-shaped cells in the initial segment of male and female Malpighian tubules (at protein level). Expressed in the spermatheca (at protein level). Expressed in the somatic cyst cells of the testes, with increased expression at the tail end of elongating cysts. Expressed in the ovaries with strong expression in the posterior polar cells and in border cells of stage 8, 9, and 10 follicles. In adults and third-instar larvae, expressed in the brain, ventral ganglion, and stellate cells. Also expressed in the foregut and the imaginal disks (eye, antennal and leg) of third-instar larvae. In stage 17 embryos, expressed in the tracheal system, foregut, hindgut and epidermis. Also expressed in the stellate cell progenitors of the caudal visceral mesoderm in embryos.

It localises to the cell membrane. The protein resides in the secreted. The catalysed reaction is Preferential cleavage of polypeptides between hydrophobic residues, particularly with Phe or Tyr at P1'.. Its function is as follows. Metalloendoprotease which cleaves peptides such as tachykinin peptide TK-2 at the amino side of hydrophobic residues. Functions in female fertility, embryogenesis and memory formation. Required in females for normal patterns of egg laying, probably due to its function in sperm retention and preventing sperm displacement by rival ejaculates. Also required for normal patterns of hatching due to its important role in early embryonic development. Required in the dorsal paired medial neurons for the proper formation of middle-term memory. Also required in the mushroom body neurons where it functions redundantly with neprilysins Nep3 and Nep4 in normal long-term memory formation. This Drosophila melanogaster (Fruit fly) protein is Neprilysin-2.